The primary structure comprises 316 residues: tRNA dimethylallyltransferase (316 aa).

ATP is bound at residue 17 to 24; it reads GPTASGKT. A substrate-binding site is contributed by 19 to 24; that stretch reads TASGKT. Interaction with substrate tRNA regions lie at residues 42–45, 166–170, 247–252, and 280–287; these read DSAL, QRLSR, RCVGYR, and KRQITWLR.

The protein belongs to the IPP transferase family. Monomer. Requires Mg(2+) as cofactor.

It carries out the reaction adenosine(37) in tRNA + dimethylallyl diphosphate = N(6)-dimethylallyladenosine(37) in tRNA + diphosphate. Its function is as follows. Catalyzes the transfer of a dimethylallyl group onto the adenine at position 37 in tRNAs that read codons beginning with uridine, leading to the formation of N6-(dimethylallyl)adenosine (i(6)A). The protein is tRNA dimethylallyltransferase of Escherichia coli O45:K1 (strain S88 / ExPEC).